Here is a 351-residue protein sequence, read N- to C-terminus: Probable protein phosphatase 2C 41 (351 aa).

A PPM-type phosphatase domain is found at 62–348 (FTSICSNRGE…DDISVLCLFF (287 aa)). 4 residues coordinate Mn(2+): Asp98, Gly99, Asp293, and Asp339.

The protein belongs to the PP2C family. Mg(2+) serves as cofactor. Requires Mn(2+) as cofactor.

It catalyses the reaction O-phospho-L-seryl-[protein] + H2O = L-seryl-[protein] + phosphate. The catalysed reaction is O-phospho-L-threonyl-[protein] + H2O = L-threonyl-[protein] + phosphate. This chain is Probable protein phosphatase 2C 41, found in Arabidopsis thaliana (Mouse-ear cress).